A 336-amino-acid chain; its full sequence is Glyceraldehyde-3-phosphate dehydrogenase (336 aa).

Residues 12–13 (RI), D34, R78, and S120 contribute to the NAD(+) site. D-glyceraldehyde 3-phosphate is bound by residues 151–153 (SCT) and T182. C152 functions as the Nucleophile in the catalytic mechanism. Residue N183 participates in NAD(+) binding. Residues 211 to 212 (NG) and R234 contribute to the D-glyceraldehyde 3-phosphate site. N316 lines the NAD(+) pocket.

This sequence belongs to the glyceraldehyde-3-phosphate dehydrogenase family. As to quaternary structure, homotetramer.

The protein resides in the cytoplasm. The enzyme catalyses D-glyceraldehyde 3-phosphate + phosphate + NAD(+) = (2R)-3-phospho-glyceroyl phosphate + NADH + H(+). It participates in carbohydrate degradation; glycolysis; pyruvate from D-glyceraldehyde 3-phosphate: step 1/5. In terms of biological role, catalyzes the oxidative phosphorylation of glyceraldehyde 3-phosphate (G3P) to 1,3-bisphosphoglycerate (BPG) using the cofactor NAD. The first reaction step involves the formation of a hemiacetal intermediate between G3P and a cysteine residue, and this hemiacetal intermediate is then oxidized to a thioester, with concomitant reduction of NAD to NADH. The reduced NADH is then exchanged with the second NAD, and the thioester is attacked by a nucleophilic inorganic phosphate to produce BPG. This is Glyceraldehyde-3-phosphate dehydrogenase (gap) from Heyndrickxia coagulans (Weizmannia coagulans).